The chain runs to 143 residues: Putative pre-16S rRNA nuclease (143 aa).

Belongs to the YqgF nuclease family.

It localises to the cytoplasm. Its function is as follows. Could be a nuclease involved in processing of the 5'-end of pre-16S rRNA. This is Putative pre-16S rRNA nuclease from Lactococcus lactis subsp. cremoris (strain SK11).